We begin with the raw amino-acid sequence, 393 residues long: MANKEKLPWDLEEEILSRVPPTSLDRFKTVCKRWNALFNDKTFINNHKMTFQFVLSTRSKIYSVSVNPKVEVRELTLNNPGLKAQRHKNLFATSGLLLCDVGNGAVVWNPWLKQSRCIKLEVNEPSLDFLGIGYDNNKRVEEIVYKTLSVYMKDLGSQYTWKIHDFASDTWIDQEIEKTKYSRRITEGSVTIRLTNLSVVSLNGKFFKFCDLPSGKNRRRDALALRVFREDRFSLLRQCHVTKKIKIWVTKNKIDNRYGGDVKWMSFMEVSIPTMPDLEHPKFNSQPSYFIDDKRLVICSCDETGRAWIYVVGGNKLVSKTQLDSVVDPWPLHCTYFPSLVLVPGGQREEAELQVQFQFPYLCFSYMEAKNLHVTTELYVPGKTKSSIKLHYG.

Residues 1-47 form the F-box domain; the sequence is MANKEKLPWDLEEEILSRVPPTSLDRFKTVCKRWNALFNDKTFINNH. Kelch repeat units follow at residues 151 to 199 and 308 to 357; these read YMKD…NLSV and WIYV…QVQF.

The chain is Putative F-box/kelch-repeat protein At1g32430 from Arabidopsis thaliana (Mouse-ear cress).